The sequence spans 357 residues: Sorbitol dehydrogenase (357 aa).

Ala2 is subject to N-acetylalanine. Cys45 contributes to the Zn(2+) binding site. Tyr51 lines the substrate pocket. His70 and Glu71 together coordinate Zn(2+). Glu156 lines the substrate pocket. The NAD(+) site is built by Ile184, Asp204, and Arg209. Ser211 and Ser225 each carry phosphoserine. Residues 273-275 and 297-299 each bind NAD(+); these read VGL and VFR. Substrate-binding residues include Arg299 and Tyr300.

This sequence belongs to the zinc-containing alcohol dehydrogenase family. As to quaternary structure, homotetramer. Zn(2+) serves as cofactor. Expressed in liver. Expressed in kidney and epithelial cells of both benign and malignant prostate tissue. Expressed in epididymis (at protein level).

The protein localises to the mitochondrion membrane. It localises to the cell projection. The protein resides in the cilium. Its subcellular location is the flagellum. The catalysed reaction is keto-D-fructose + NADH + H(+) = D-sorbitol + NAD(+). The enzyme catalyses L-threitol + NAD(+) = L-erythrulose + NADH + H(+). It catalyses the reaction xylitol + NAD(+) = D-xylulose + NADH + H(+). It carries out the reaction ribitol + NAD(+) = D-ribulose + NADH + H(+). The catalysed reaction is (R,R)-butane-2,3-diol + NAD(+) = (R)-acetoin + NADH + H(+). The enzyme catalyses L-iditol + NAD(+) = keto-L-sorbose + NADH + H(+). Its activity is regulated as follows. Inhibited by CP-166,572, an inhibitor that is competitive with fructose. Also competitively inhibited by phenanthroline and 4-methylpyrazole in vitro. In terms of biological role, polyol dehydrogenase that catalyzes the reversible NAD(+)-dependent oxidation of various sugar alcohols. Is mostly active with D-sorbitol (D-glucitol), L-threitol, xylitol and ribitol as substrates, leading to the C2-oxidized products D-fructose, L-erythrulose, D-xylulose, and D-ribulose, respectively. Is a key enzyme in the polyol pathway that interconverts glucose and fructose via sorbitol, which constitutes an important alternate route for glucose metabolism. The polyol pathway is believed to be involved in the etiology of diabetic complications, such as diabetic neuropathy and retinopathy, induced by hyperglycemia. May play a role in sperm motility by using sorbitol as an alternative energy source for sperm motility. May have a more general function in the metabolism of secondary alcohols since it also catalyzes the stereospecific oxidation of (2R,3R)-2,3-butanediol. To a lesser extent, can also oxidize L-arabinitol, galactitol and D-mannitol and glycerol in vitro. Oxidizes neither ethanol nor other primary alcohols. Cannot use NADP(+) as the electron acceptor. The polypeptide is Sorbitol dehydrogenase (SORD) (Homo sapiens (Human)).